A 364-amino-acid polypeptide reads, in one-letter code: MEVKEALFMNKGEGESSYAQSSSFTETVTSMTMPVLENAVETLFSKDFHLLQALNAADLGCAAGPTTFTVISTIKRMMEKKCRELNCQTLELQVYLNDLPGNDFNTLFKGLSSKVVGNKCEEVPCYVVGVPGSFHGRLFPRNSLHLVHSCYSVHWLTQAPKGLTSKEGLALNKGKIYISKTSPPVVREAYLSQFHEDFTMFLNSRSQEVVPNGCMVLILRGRLSSDPSDMESCFTWELLAVAIAELVSQGLIDEDKLDTFNVPSYFPSLEEVKDIVERNGSFTIDHMEGFELDSPQMQENDKWVRGEKFATVARAFTEPIISNQFGHEIMDKLYEKFTHIVVSDLEAKIPKITSIILVLSKIVG.

The S-adenosyl-L-homocysteine site is built by Tyr18, Cys61, Asp98, Leu99, Ser133, and Phe134. Residues Asn172, Asp258, Phe260, and Asn261 each contribute to the Mg(2+) site.

The protein belongs to the methyltransferase superfamily. Type-7 methyltransferase family. The cofactor is Mg(2+).

Its function is as follows. No detectable N-methyltransferase activity. The chain is Probable methyltransferase ICS2 from Camellia irrawadiensis (Burmese tea).